We begin with the raw amino-acid sequence, 258 residues long: Large ribosomal subunit protein eL8z (258 aa).

The segment at 1–20 is disordered; sequence MAPKRGGRAPVPAKKKTEKV.

Belongs to the eukaryotic ribosomal protein eL8 family.

The protein is Large ribosomal subunit protein eL8z (RPL7A-1) of Oryza sativa subsp. japonica (Rice).